We begin with the raw amino-acid sequence, 354 residues long: Uroporphyrinogen decarboxylase (354 aa).

Substrate contacts are provided by residues 27–31 (RQAGR), Asp77, Tyr154, Thr209, and His327.

It belongs to the uroporphyrinogen decarboxylase family. In terms of assembly, homodimer.

The protein resides in the cytoplasm. The catalysed reaction is uroporphyrinogen III + 4 H(+) = coproporphyrinogen III + 4 CO2. It functions in the pathway porphyrin-containing compound metabolism; protoporphyrin-IX biosynthesis; coproporphyrinogen-III from 5-aminolevulinate: step 4/4. Catalyzes the decarboxylation of four acetate groups of uroporphyrinogen-III to yield coproporphyrinogen-III. The sequence is that of Uroporphyrinogen decarboxylase from Pseudomonas putida (strain W619).